The sequence spans 163 residues: Putative phosphinothricin acetyltransferase YwnH (163 aa).

Residues 1–158 enclose the N-acetyltransferase domain; the sequence is MTLRLAEHRD…DGKRYDLKIL (158 aa). Residues 85-87, 94-98, and 124-126 contribute to the acetyl-CoA site; these read IYI, KGVGS, and NKP.

It belongs to the acetyltransferase family. PAT/BAR subfamily.

It catalyses the reaction phosphinothricin + acetyl-CoA = N-acetylphosphinothricin + CoA + H(+). In terms of biological role, this enzyme is an effector of phosphinothricin tripeptide (PTT or bialaphos) resistance. Inactivates PTT by transfer of an acetyl group. The chain is Putative phosphinothricin acetyltransferase YwnH (ywnH) from Bacillus subtilis (strain 168).